Here is a 335-residue protein sequence, read N- to C-terminus: Phosphate acyltransferase (335 aa).

Belongs to the PlsX family. As to quaternary structure, homodimer. Probably interacts with PlsY.

It is found in the cytoplasm. The catalysed reaction is a fatty acyl-[ACP] + phosphate = an acyl phosphate + holo-[ACP]. It participates in lipid metabolism; phospholipid metabolism. Functionally, catalyzes the reversible formation of acyl-phosphate (acyl-PO(4)) from acyl-[acyl-carrier-protein] (acyl-ACP). This enzyme utilizes acyl-ACP as fatty acyl donor, but not acyl-CoA. This chain is Phosphate acyltransferase, found in Streptococcus pyogenes serotype M1.